The chain runs to 216 residues: Adenylate kinase (216 aa).

ATP is bound at residue 10–15; sequence GAGKGT. Residues 30–59 form an NMP region; sequence STGDMFRAAMKAETEMGLQAKSFIDKGALV. AMP-binding positions include Thr-31, Arg-36, 57–59, 85–88, and Gln-92; these read ALV and GFPR. An LID region spans residues 126–163; sequence GRRICKECGATYHLEFNAPAKADVCDKCGGELYQRSDD. Arg-127 provides a ligand contact to ATP. Residues Cys-130 and Cys-133 each contribute to the Zn(2+) site. ATP is bound at residue 136 to 137; the sequence is TY. Cys-150 and Cys-153 together coordinate Zn(2+). Residues Arg-160 and Arg-171 each contribute to the AMP site. Gln-199 lines the ATP pocket.

This sequence belongs to the adenylate kinase family. As to quaternary structure, monomer.

Its subcellular location is the cytoplasm. It catalyses the reaction AMP + ATP = 2 ADP. The protein operates within purine metabolism; AMP biosynthesis via salvage pathway; AMP from ADP: step 1/1. In terms of biological role, catalyzes the reversible transfer of the terminal phosphate group between ATP and AMP. Plays an important role in cellular energy homeostasis and in adenine nucleotide metabolism. This is Adenylate kinase from Bacillus anthracis (strain A0248).